Reading from the N-terminus, the 90-residue chain is Sec-independent protein translocase protein TatA (90 aa).

Residues 1–21 (MGSMSIWHWVIVAVIVMLLFG) traverse the membrane as a helical segment. Residues 44–90 (AEDETPPAVQAAPPPAEPVRTIPHATETSPGTAIPASHLPGGERKPV) are disordered.

It belongs to the TatA/E family. In terms of assembly, the Tat system comprises two distinct complexes: a TatABC complex, containing multiple copies of TatA, TatB and TatC subunits, and a separate TatA complex, containing only TatA subunits. Substrates initially bind to the TatABC complex, which probably triggers association of the separate TatA complex to form the active translocon.

It is found in the cell inner membrane. Its function is as follows. Part of the twin-arginine translocation (Tat) system that transports large folded proteins containing a characteristic twin-arginine motif in their signal peptide across membranes. TatA could form the protein-conducting channel of the Tat system. The sequence is that of Sec-independent protein translocase protein TatA from Methylobacterium radiotolerans (strain ATCC 27329 / DSM 1819 / JCM 2831 / NBRC 15690 / NCIMB 10815 / 0-1).